A 241-amino-acid polypeptide reads, in one-letter code: Hydantoin racemase (241 aa).

This sequence belongs to the HyuE racemase family. As to quaternary structure, homotetramer.

The enzyme catalyses a D-5-monosubstituted hydantoin = a L-5-monosubstituted hydantoin. It carries out the reaction D-5-benzylhydantoin = L-5-benzylhydantoin. It catalyses the reaction D-5-isobutylhydantoin = L-5-isobutylhydantoin. Inhibited by Cu(2+), Hg(2+), Pb(2+) and Zn(2+). The activity is twofold lower in the presence of Mn(2+), Co(2+) and Ni(2+). The insignificant effect of the metal chelating agent EDTA on the hydantoin racemase activity would indicate that it is not a metalloenzyme. Functionally, may be involved in the asymmetric conversion of racemic 5-substituted hydantoins to the corresponding L-amino acids. Catalyzes the racemization via enolization of D- and L-5-monosubstituted hydantoins. The chain is Hydantoin racemase from Rhizobium meliloti (Ensifer meliloti).